A 107-amino-acid chain; its full sequence is Class I hydrophobin hgfI (107 aa).

Residues Met1 to Arg24 form the signal peptide. 4 disulfide bridges follow: Cys27–Cys88, Cys34–Cys82, Cys35–Cys68, and Cys89–Cys102.

This sequence belongs to the fungal hydrophobin family. As to quaternary structure, self-assembles to form functional amyloid fibrils called rodlets with a length range 100-150 nm. Self-assembly into fibrillar rodlets occurs spontaneously at hydrophobic:hydrophilic interfaces and the rodlets further associate laterally to form amphipathic monolayers. As to expression, only weekly expressed in hyphae cultured in liquid medium.

It is found in the secreted. It localises to the cell wall. In terms of biological role, aerial growth, conidiation, and dispersal of filamentous fungi in the environment rely upon a capability of their secreting small amphipathic proteins called hydrophobins (HPBs) with low sequence identity. Class I can self-assemble into an outermost layer of rodlet bundles on aerial cell surfaces, conferring cellular hydrophobicity that supports fungal growth, development and dispersal; whereas Class II form highly ordered films at water-air interfaces through intermolecular interactions but contribute nothing to the rodlet structure. HgfI is a class I hydrophobin that is involved in cell surface hydrophobicity and lowers the surface tension of water and change the nature of the surfaces to which it adsorbs. This Grifola frondosa (Maitake) protein is Class I hydrophobin hgfI.